A 153-amino-acid chain; its full sequence is Ribosome maturation factor RimP (153 aa).

The protein belongs to the RimP family.

The protein resides in the cytoplasm. Its function is as follows. Required for maturation of 30S ribosomal subunits. The protein is Ribosome maturation factor RimP of Glaesserella parasuis serovar 5 (strain SH0165) (Haemophilus parasuis).